Reading from the N-terminus, the 246-residue chain is Tyrosine recombinase XerD-like (246 aa).

Residues 1–72 form the Core-binding (CB) domain; it reads MINDINNFIE…AVNQFLFFLY (72 aa). In terms of domain architecture, Tyr recombinase spans 84–246; that stretch reads QETEKITLTQ…TPITLERYYR (163 aa). Catalysis depends on residues lysine 149 and arginine 212. Catalysis depends on tyrosine 244, which acts as the O-(3'-phospho-DNA)-tyrosine intermediate.

Belongs to the 'phage' integrase family. XerD-like subfamily.

The protein localises to the cytoplasm. Its function is as follows. Putative tyrosine recombinase. Not involved in the cutting and rejoining of the recombining DNA molecules on dif(SL) site. The polypeptide is Tyrosine recombinase XerD-like (Streptococcus agalactiae serotype III (strain NEM316)).